The following is a 446-amino-acid chain: Questin oxidase (446 aa).

The protein belongs to the questin oxidase family.

It catalyses the reaction questin + NADPH + O2 = demethylsulochrin + NADP(+). The protein operates within secondary metabolite biosynthesis. Questin oxidase; part of the gene cluster that mediates the biosynthesis of geodin, an intermediate in the biosynthesis of other natural products. The pathway begins with the synthesis of atrochrysone thioester by the polyketide synthase (PKS) gedC. The atrochrysone carboxyl ACP thioesterase gedB then breaks the thioester bond and releases the atrochrysone carboxylic acid from gedC. The atrochrysone carboxylic acid is then converted to atrochrysone which is further transformed into emodinanthrone. The next step is performed by the emodinanthrone oxygenase gedH that catalyzes the oxidation of emodinanthrone to emodin. Emodin O-methyltransferase encoded probably by gedA then catalyzes methylation of the 8-hydroxy group of emodin to form questin. Ring cleavage of questin by questin oxidase gedK leads to desmethylsulochrin via several intermediates including questin epoxide. Another methylation step probably catalyzed by methyltransferase gedG leads to the formation of sulochrin which is further converted to dihydrogeodin by the sulochrin halogenase gedL. Finally, the dihydrogeodin oxidase gedJ catalyzes the stereospecific phenol oxidative coupling reaction converting dihydrogeodin to geodin. The polypeptide is Questin oxidase (Aspergillus terreus (strain NIH 2624 / FGSC A1156)).